We begin with the raw amino-acid sequence, 184 residues long: Small ribosomal subunit protein uS7 (184 aa).

It belongs to the universal ribosomal protein uS7 family. As to quaternary structure, part of the 30S ribosomal subunit.

In terms of biological role, one of the primary rRNA binding proteins, it binds directly to 16S rRNA where it nucleates assembly of the head domain of the 30S subunit. Is located at the subunit interface close to the decoding center. The sequence is that of Small ribosomal subunit protein uS7 from Thermoplasma volcanium (strain ATCC 51530 / DSM 4299 / JCM 9571 / NBRC 15438 / GSS1).